The chain runs to 301 residues: Ribosomal RNA large subunit methyltransferase F (301 aa).

This sequence belongs to the methyltransferase superfamily. METTL16/RlmF family.

It localises to the cytoplasm. The catalysed reaction is adenosine(1618) in 23S rRNA + S-adenosyl-L-methionine = N(6)-methyladenosine(1618) in 23S rRNA + S-adenosyl-L-homocysteine + H(+). Its function is as follows. Specifically methylates the adenine in position 1618 of 23S rRNA. In Colwellia psychrerythraea (strain 34H / ATCC BAA-681) (Vibrio psychroerythus), this protein is Ribosomal RNA large subunit methyltransferase F.